Reading from the N-terminus, the 457-residue chain is RNA-binding suppressor of PAS kinase protein 1 (457 aa).

The R3H domain maps to R26–N88. Disordered stretches follow at residues I142–E181, L195–Y291, and F406–I457. Residues N145 to N158 show a composition bias toward polar residues. A compositionally biased stretch (basic and acidic residues) spans K159–E181. S198 carries the post-translational modification Phosphoserine. Over residues S226–T247 the composition is skewed to low complexity. The span at I248–Y258 shows a compositional bias: polar residues. Residues K418 to S435 show a composition bias toward basic and acidic residues. S435, S439, and S447 each carry phosphoserine. Residues R443–I457 are compositionally biased toward basic and acidic residues.

It is found in the cytoplasm. This chain is RNA-binding suppressor of PAS kinase protein 1 (RBS1), found in Saccharomyces cerevisiae (strain ATCC 204508 / S288c) (Baker's yeast).